Here is a 360-residue protein sequence, read N- to C-terminus: Heat-inducible transcription repressor HrcA (360 aa).

Belongs to the HrcA family.

In terms of biological role, negative regulator of class I heat shock genes (grpE-dnaK-dnaJ and groELS operons). Prevents heat-shock induction of these operons. The protein is Heat-inducible transcription repressor HrcA of Streptococcus thermophilus (strain CNRZ 1066).